Consider the following 163-residue polypeptide: Large ribosomal subunit protein bL21 (163 aa).

The disordered stretch occupies residues 124–163; that stretch reads KETTKKTKATVSIKKTAKKPSEKKSAPQKKAAVVSNNKED.

The protein belongs to the bacterial ribosomal protein bL21 family. As to quaternary structure, part of the 50S ribosomal subunit. Contacts protein L20.

This protein binds to 23S rRNA in the presence of protein L20. The protein is Large ribosomal subunit protein bL21 of Bartonella quintana (strain Toulouse) (Rochalimaea quintana).